A 616-amino-acid chain; its full sequence is MYKKLAIATLLYSADYLPGVFALGHQVNKLLEEAGKKGDIETCLIVTTSLFNDTLSELAKNLLQSIYTKIVLVEPLDCQEESIQKNSENLALLERPELSFALIKARLWELTQFEQVLYLDSDTLPLNKEFLKLFDIMSKQTTSQVGAIADIGWPDMFNSGVMMLIPDTDTASVLQNYIIENTSIDGSDQGILNQFFNQNCCTDELVKDSFSREWVQLSFTYNVTIPNLGYQSSPAMNYFKPSIKLIHFIGKHKPWSLWSQKNFIKNEYHDQWNEVYEEFKEEHQLNNEVSKPKISDSDKTETPETITPVDAPPSNEPTTNQEIDTISTVEENVDNQNAEPVPNSDHSPAPNPVPLDFTKWLTTFINKDHLTNQPVNESREYSKENDNNIINSSSNRDQESPPNSTQEPNSSYSVVSTQADSDEHQNAEEEDSTTDNASNSGEESHLDDISTAASSNNNVSNQPDNKNFSNSKENNISVEPSPSNPEQKRSTDNIQKPSVSTNDLPDDVEPHTSVDDNIQYLEKDKEGYEEFLPDVYESNAIDNEEEFFDDDARDATEGETKTSAVADKQEDMKLTAEETNQPQQEMPNFKFDWEDSDYLSKVERCFPDDIFEYAVE.

Residues Leu-10, Tyr-16, and Arg-95 each coordinate UDP. Positions 10, 16, 95, 104, 120, 122, 158, 159, 185, 188, and 189 each coordinate UDP-alpha-D-glucose. Residues Asp-120 and Asp-122 each contribute to the UDP site. Positions 120 and 122 each coordinate Mn(2+). O-linked (Glc...) tyrosine glycosylation occurs at Tyr-230. UDP-binding residues include His-247, Gly-250, and Lys-253. Mn(2+) is bound at residue His-247. The UDP-alpha-D-glucose site is built by Gly-250 and Lys-253. A compositionally biased stretch (basic and acidic residues) spans 283–302 (HQLNNEVSKPKISDSDKTET). Disordered regions lie at residues 283 to 320 (HQLN…PTTN), 335 to 354 (NQNA…NPVP), and 371 to 516 (TNQP…SVDD). Residues 377–386 (ESREYSKEND) are compositionally biased toward basic and acidic residues. A compositionally biased stretch (polar residues) spans 400–419 (SPPNSTQEPNSSYSVVSTQA). Over residues 450-461 (STAASSNNNVSN) the composition is skewed to low complexity. Composition is skewed to polar residues over residues 462 to 485 (QPDN…PSNP) and 492 to 503 (DNIQKPSVSTND). Tyr-598 is a glycosylation site (O-linked (Glc...) tyrosine).

Belongs to the glycosyltransferase 8 family. Glycogenin subfamily. It depends on Mn(2+) as a cofactor.

It localises to the cytoplasm. Its subcellular location is the vacuole. It catalyses the reaction L-tyrosyl-[glycogenin] + UDP-alpha-D-glucose = alpha-D-glucosyl-L-tyrosyl-[glycogenin] + UDP + H(+). The catalysed reaction is [1,4-alpha-D-glucosyl](n)-L-tyrosyl-[glycogenin] + UDP-alpha-D-glucose = [1,4-alpha-D-glucosyl](n+1)-L-tyrosyl-[glycogenin] + UDP + H(+). Its function is as follows. Self-glucosylating initiator of glycogen synthesis. It catalyzes the formation of a short alpha (1,4)-glucosyl chain covalently attached via a glucose 1-O-tyrosyl linkage to internal tyrosine residues and these chains act as primers for the elongation reaction catalyzed by glycogen synthase. Capable of transferring glucosyl residues to unbound acceptors such as free oligoglucans or oligoglucan derivatives. In Saccharomyces cerevisiae (strain YJM789) (Baker's yeast), this protein is Glycogenin-1 (GLG1).